A 278-amino-acid chain; its full sequence is HTH-type transcriptional regulator TsaQ1/TsaQ2 (278 aa).

One can recognise an HTH iclR-type domain in the interval 19–80 (VHSLAKGLEI…PRSRKLAMGA (62 aa)). Positions 40–59 (NQQLVELTGLPKATVSRLTS) form a DNA-binding region, H-T-H motif. An IclR-ED domain is found at 95–266 (LQRIARPHME…VQDIQAEMRA (172 aa)).

Its function is as follows. Both copies function as additional regulators for the tsa locus, specifically for tsaT. The chain is HTH-type transcriptional regulator TsaQ1/TsaQ2 (tsaQ1) from Comamonas testosteroni (Pseudomonas testosteroni).